Reading from the N-terminus, the 374-residue chain is Lipid-A-disaccharide synthase (374 aa).

This sequence belongs to the LpxB family.

The catalysed reaction is a lipid X + a UDP-2-N,3-O-bis[(3R)-3-hydroxyacyl]-alpha-D-glucosamine = a lipid A disaccharide + UDP + H(+). It functions in the pathway bacterial outer membrane biogenesis; LPS lipid A biosynthesis. In terms of biological role, condensation of UDP-2,3-diacylglucosamine and 2,3-diacylglucosamine-1-phosphate to form lipid A disaccharide, a precursor of lipid A, a phosphorylated glycolipid that anchors the lipopolysaccharide to the outer membrane of the cell. The polypeptide is Lipid-A-disaccharide synthase (Pseudomonas fluorescens (strain ATCC BAA-477 / NRRL B-23932 / Pf-5)).